The chain runs to 261 residues: ATP synthase subunit a (261 aa).

The next 7 helical transmembrane spans lie at 31–51, 64–84, 97–117, 126–146, 166–188, 201–223, and 235–255; these read IAFTNSAMWMVVTLAALLIFM, WQAAVESFTGFVAGMMATNIG, LFMFILIANIMGMMPTGVVGV, LTVTGVLAVISFSIVLVVGFW, IPMIFVIELFSFLIRPFSLGLRL, VLAGFVINGINAGALTVAIVSIP, and ELLVCAIQAYVFALLTSLYLN.

It belongs to the ATPase A chain family. In terms of assembly, F-type ATPases have 2 components, CF(1) - the catalytic core - and CF(0) - the membrane proton channel. CF(1) has five subunits: alpha(3), beta(3), gamma(1), delta(1), epsilon(1). CF(0) has three main subunits: a(1), b(2) and c(9-12). The alpha and beta chains form an alternating ring which encloses part of the gamma chain. CF(1) is attached to CF(0) by a central stalk formed by the gamma and epsilon chains, while a peripheral stalk is formed by the delta and b chains.

Its subcellular location is the cell inner membrane. Key component of the proton channel; it plays a direct role in the translocation of protons across the membrane. This chain is ATP synthase subunit a, found in Rhizorhabdus wittichii (strain DSM 6014 / CCUG 31198 / JCM 15750 / NBRC 105917 / EY 4224 / RW1) (Sphingomonas wittichii).